Consider the following 396-residue polypeptide: Ribosomal RNA large subunit methyltransferase I (396 aa).

Residues 2–79 (SIRIKLKPGR…KEEAIDRDFF (78 aa)) form the PUA domain.

It belongs to the methyltransferase superfamily. RlmI family.

It is found in the cytoplasm. The enzyme catalyses cytidine(1962) in 23S rRNA + S-adenosyl-L-methionine = 5-methylcytidine(1962) in 23S rRNA + S-adenosyl-L-homocysteine + H(+). In terms of biological role, specifically methylates the cytosine at position 1962 (m5C1962) of 23S rRNA. This Shewanella amazonensis (strain ATCC BAA-1098 / SB2B) protein is Ribosomal RNA large subunit methyltransferase I.